The following is a 417-amino-acid chain: Gamma-glutamyl phosphate reductase (417 aa).

The protein belongs to the gamma-glutamyl phosphate reductase family.

It is found in the cytoplasm. The enzyme catalyses L-glutamate 5-semialdehyde + phosphate + NADP(+) = L-glutamyl 5-phosphate + NADPH + H(+). It participates in amino-acid biosynthesis; L-proline biosynthesis; L-glutamate 5-semialdehyde from L-glutamate: step 2/2. Functionally, catalyzes the NADPH-dependent reduction of L-glutamate 5-phosphate into L-glutamate 5-semialdehyde and phosphate. The product spontaneously undergoes cyclization to form 1-pyrroline-5-carboxylate. In Streptococcus agalactiae serotype Ia (strain ATCC 27591 / A909 / CDC SS700), this protein is Gamma-glutamyl phosphate reductase.